Reading from the N-terminus, the 305-residue chain is Plant-type L-asparaginase (305 aa).

The active-site Nucleophile is T175. Substrate is bound by residues 202–205 and 224–227; these read RVGD and TGLG.

Belongs to the Ntn-hydrolase family. As to quaternary structure, heterotetramer of two alpha and two beta chains arranged as a dimer of alpha/beta heterodimers. The uncleaved protein forms homodimers. In terms of processing, autocleaved. Generates the alpha and beta subunits. The N-terminal residue of the beta subunit is thought to be responsible for the nucleophile hydrolase activity.

It catalyses the reaction L-asparagine + H2O = L-aspartate + NH4(+). Catalyzes the hydrolysis of L-asparagine into L-aspartate and ammonia. Does not exhibit glutaminase activity. This is Plant-type L-asparaginase from Pyrococcus abyssi (strain GE5 / Orsay).